A 420-amino-acid chain; its full sequence is Serine--tRNA ligase (420 aa).

An L-serine-binding site is contributed by 225–227 (TLE). 256-258 (RQE) serves as a coordination point for ATP. Residue Glu279 participates in L-serine binding. 343 to 346 (EVSS) serves as a coordination point for ATP. Residue Thr379 participates in L-serine binding.

Belongs to the class-II aminoacyl-tRNA synthetase family. Type-1 seryl-tRNA synthetase subfamily. Homodimer. The tRNA molecule binds across the dimer.

Its subcellular location is the cytoplasm. It carries out the reaction tRNA(Ser) + L-serine + ATP = L-seryl-tRNA(Ser) + AMP + diphosphate + H(+). The enzyme catalyses tRNA(Sec) + L-serine + ATP = L-seryl-tRNA(Sec) + AMP + diphosphate + H(+). The protein operates within aminoacyl-tRNA biosynthesis; selenocysteinyl-tRNA(Sec) biosynthesis; L-seryl-tRNA(Sec) from L-serine and tRNA(Sec): step 1/1. Its function is as follows. Catalyzes the attachment of serine to tRNA(Ser). Is also able to aminoacylate tRNA(Sec) with serine, to form the misacylated tRNA L-seryl-tRNA(Sec), which will be further converted into selenocysteinyl-tRNA(Sec). The polypeptide is Serine--tRNA ligase (Mycoplasma pneumoniae (strain ATCC 29342 / M129 / Subtype 1) (Mycoplasmoides pneumoniae)).